Reading from the N-terminus, the 479-residue chain is UDP-glucose flavonoid 3-O-glucosyltransferase 6 (479 aa).

The active-site Proton acceptor is the histidine 17. Histidine 17 serves as a coordination point for an anthocyanidin. Aspartate 121 functions as the Charge relay in the catalytic mechanism. 8 residues coordinate UDP-alpha-D-glucose: threonine 143, alanine 354, glutamine 356, histidine 371, tryptophan 374, asparagine 375, serine 376, and glutamate 379. An anthocyanidin is bound at residue alanine 394. Residues glutamate 395 and glutamine 396 each coordinate UDP-alpha-D-glucose. The tract at residues 454–479 is disordered; the sequence is MSRKALEEDGSSYSSLGRFLDQIQTS.

It belongs to the UDP-glycosyltransferase family. As to expression, strongly expressed in achenes, with lower expression levels detected in receptacles.

It catalyses the reaction a flavonol + UDP-alpha-D-glucose = a flavonol 3-O-beta-D-glucoside + UDP + H(+). Its function is as follows. Broad spectrum multifunctional glucosyltransferase. Catalyzes the formation of flavonol 3-O-glucosides during fruit ripening. Accepted substrates include several flavonoids, hydroxycoumarins and beta-naphthols. Uses UDP-Glc as a sugar donor, but not UDP-Gal or UDP-GlcUA. May also be involved in detoxification of xenobiotics. This chain is UDP-glucose flavonoid 3-O-glucosyltransferase 6, found in Fragaria ananassa (Strawberry).